We begin with the raw amino-acid sequence, 419 residues long: MLNQFPGQLSNNVFCFPPIESETKSGKKASWIICVQVMHHNTILPITDEMFSTDVKDAVAEIFTKFFVEEGAVRISKTTRVTEGKNLGKKNATTVVHQAFKDALSKYNRHARQKRGAHTNRGMIPPMLVKHFNIIPKTFFEDETDPIVQRKRNGVRAVACQQGDGSILLYSRTEKEFLGLDNIKKELKQLYLFIDVRVYLDGELYLHHKPLQWIAGQANAKVDSSELHFYVFDCFWSDQLQMPSNKRQQLLTNIFKQKEDLIFIHQVENFSIKDEDEALRLKTQFIKEGYEGAIVRNANGPYEPGYNNYHSPHLAKLKPLLDAEFILVDYTQGKKGKDLGAILWVCELPNKKRFVVTPKHLTYADRYALFQKLTPALFKKHLYGKELTVEYAELSPKTGIPLQARAVGFREPINVLEII.

Residues 1–120 (MLNQFPGQLS…ARQKRGAHTN (120 aa)) are NTD. The AD domain stretch occupies residues 121–317 (RGMIPPMLVK…NYHSPHLAKL (197 aa)). Lysine 151 (N6-AMP-lysine intermediate) is an active-site residue. Residues 318–419 (KPLLDAEFIL…REPINVLEII (102 aa)) are OB domain.

This sequence belongs to the ATP-dependent DNA ligase family.

Its subcellular location is the virion. It catalyses the reaction ATP + (deoxyribonucleotide)n-3'-hydroxyl + 5'-phospho-(deoxyribonucleotide)m = (deoxyribonucleotide)n+m + AMP + diphosphate.. Its function is as follows. Very low-fidelity DNA ligase that seals nicks in double-stranded DNA during DNA repair. Together with the viral repair DNA polymerase X, fills the single nucleotide gaps generated by the AP endonuclease. It is not essential for viral replication and recombination. Displays a very low adenylation activity towards DNA with 3'-dideoxy- or 3'-amino-terminated nicks compared to regular nick DNA. This chain is DNA ligase, found in Ornithodoros (relapsing fever ticks).